We begin with the raw amino-acid sequence, 324 residues long: MQETSLTKAVSPRQSLGQILLNYYQLTKPRLIVLFLITTAAGMWVAARGEVDPVLALITLLTGAMAAGSANTINCLYDRDIDYIMERTRHRPLPSGRVQPWEALVFAIALAVGAFSLQTLCANLLSACLEMAGIAVYVGVYTHWLKRSSTQNIVIGGAAGAIPPLVGWAAVTGELSWAAWVLFAIIFIWTPPHFWPLAMLIQEDYAKVNVPMMPVVDGDRPTAWQIFGYTLVLLPTTLLLVYPLHACGLIYGAIALVLGVVFIRKAWELVQTPEDKDQARAVFKFSILYMMILCAAMGIDSLPLTHAVVSQVTANLQTLVGTIL.

9 helical membrane-spanning segments follow: residues 31–51 (LIVLFLITTAAGMWVAARGEV), 53–73 (PVLALITLLTGAMAAGSANTI), 104–124 (LVFAIALAVGAFSLQTLCANL), 125–145 (LSACLEMAGIAVYVGVYTHWL), 153–173 (IVIGGAAGAIPPLVGWAAVTG), 181–201 (VLFAIIFIWTPPHFWPLAMLI), 222–242 (TAWQIFGYTLVLLPTTLLLVY), 243–263 (PLHACGLIYGAIALVLGVVFI), and 285–305 (FSILYMMILCAAMGIDSLPLT).

It belongs to the UbiA prenyltransferase family. Protoheme IX farnesyltransferase subfamily.

It is found in the cell inner membrane. It carries out the reaction heme b + (2E,6E)-farnesyl diphosphate + H2O = Fe(II)-heme o + diphosphate. It participates in porphyrin-containing compound metabolism; heme O biosynthesis; heme O from protoheme: step 1/1. Its function is as follows. Converts heme B (protoheme IX) to heme O by substitution of the vinyl group on carbon 2 of heme B porphyrin ring with a hydroxyethyl farnesyl side group. The sequence is that of Protoheme IX farnesyltransferase from Cyanothece sp. (strain PCC 7425 / ATCC 29141).